Consider the following 147-residue polypeptide: Lysozyme C (147 aa).

A signal peptide spans 1 to 18 (MRSLLILVLCFLPLAALG). The C-type lysozyme domain maps to 19-147 (KVYGRCELAA…VHAWIRGCRL (129 aa)). 4 cysteine pairs are disulfide-bonded: cysteine 24–cysteine 145, cysteine 48–cysteine 133, cysteine 82–cysteine 98, and cysteine 94–cysteine 112.

It belongs to the glycosyl hydrolase 22 family. As to quaternary structure, monomer.

It is found in the secreted. The enzyme catalyses Hydrolysis of (1-&gt;4)-beta-linkages between N-acetylmuramic acid and N-acetyl-D-glucosamine residues in a peptidoglycan and between N-acetyl-D-glucosamine residues in chitodextrins.. Functionally, lysozymes have primarily a bacteriolytic function; those in tissues and body fluids are associated with the monocyte-macrophage system and enhance the activity of immunoagents. In Meleagris gallopavo (Wild turkey), this protein is Lysozyme C (LYZ).